We begin with the raw amino-acid sequence, 447 residues long: Tubulin beta chain (447 aa).

Residues Q11, E69, S138, G142, T143, G144, N204, and N226 each contribute to the GTP site. E69 lines the Mg(2+) pocket. The tract at residues 425–447 (YQDASISEGEEEYEEEVPIEGEE) is disordered. A compositionally biased stretch (acidic residues) spans 432–447 (EGEEEYEEEVPIEGEE).

This sequence belongs to the tubulin family. As to quaternary structure, dimer of alpha and beta chains. A typical microtubule is a hollow water-filled tube with an outer diameter of 25 nm and an inner diameter of 15 nM. Alpha-beta heterodimers associate head-to-tail to form protofilaments running lengthwise along the microtubule wall with the beta-tubulin subunit facing the microtubule plus end conferring a structural polarity. Microtubules usually have 13 protofilaments but different protofilament numbers can be found in some organisms and specialized cells. The cofactor is Mg(2+).

It localises to the cytoplasm. The protein resides in the cytoskeleton. Tubulin is the major constituent of microtubules, a cylinder consisting of laterally associated linear protofilaments composed of alpha- and beta-tubulin heterodimers. Microtubules grow by the addition of GTP-tubulin dimers to the microtubule end, where a stabilizing cap forms. Below the cap, tubulin dimers are in GDP-bound state, owing to GTPase activity of alpha-tubulin. In Botryotinia fuckeliana (Noble rot fungus), this protein is Tubulin beta chain (tubA).